The following is a 968-amino-acid chain: RNA polymerase-associated protein RapA (968 aa).

In terms of domain architecture, Helicase ATP-binding spans 163–332 (EVGQRFAPRV…FARLRLLDPD (170 aa)). 176–183 (DEVGLGKT) contributes to the ATP binding site. The DEAH box motif lies at 278–281 (DEAH). Residues 491–678 (RVDWLIDFLK…NTKSRYQELK (188 aa)) form the Helicase C-terminal domain.

Belongs to the SNF2/RAD54 helicase family. RapA subfamily. Interacts with the RNAP. Has a higher affinity for the core RNAP than for the holoenzyme. Its ATPase activity is stimulated by binding to RNAP.

Transcription regulator that activates transcription by stimulating RNA polymerase (RNAP) recycling in case of stress conditions such as supercoiled DNA or high salt concentrations. Probably acts by releasing the RNAP, when it is trapped or immobilized on tightly supercoiled DNA. Does not activate transcription on linear DNA. Probably not involved in DNA repair. The protein is RNA polymerase-associated protein RapA of Shewanella piezotolerans (strain WP3 / JCM 13877).